The sequence spans 165 residues: MSSKSGGAKKKAGDGRKIIADNRKARFNYSIGETFEAGIELKGSEVKSLRTGQGSLNEAYAQVTRTGEVMLVNAYIPIYLQANQFNHETRRPRKLLLHKREIEKLAAAVQRQGMTVVPLRMYFTDKGRVKVEIGLAQGKKLADKRETLKERSWERDKARLMREKG.

The protein belongs to the SmpB family.

Its subcellular location is the cytoplasm. Its function is as follows. Required for rescue of stalled ribosomes mediated by trans-translation. Binds to transfer-messenger RNA (tmRNA), required for stable association of tmRNA with ribosomes. tmRNA and SmpB together mimic tRNA shape, replacing the anticodon stem-loop with SmpB. tmRNA is encoded by the ssrA gene; the 2 termini fold to resemble tRNA(Ala) and it encodes a 'tag peptide', a short internal open reading frame. During trans-translation Ala-aminoacylated tmRNA acts like a tRNA, entering the A-site of stalled ribosomes, displacing the stalled mRNA. The ribosome then switches to translate the ORF on the tmRNA; the nascent peptide is terminated with the 'tag peptide' encoded by the tmRNA and targeted for degradation. The ribosome is freed to recommence translation, which seems to be the essential function of trans-translation. The chain is SsrA-binding protein from Parvibaculum lavamentivorans (strain DS-1 / DSM 13023 / NCIMB 13966).